The following is a 448-amino-acid chain: Ribosomal protein uS12 methylthiotransferase RimO (448 aa).

Positions 16 to 126 constitute an MTTase N-terminal domain; that stretch reads PRISFVSLGC…VVAAVHEAVP (111 aa). 6 residues coordinate [4Fe-4S] cluster: cysteine 25, cysteine 61, cysteine 90, cysteine 157, cysteine 161, and cysteine 164. The Radical SAM core domain maps to 143-380; that stretch reads LTPRHYAYLK…MEAQAGVSLK (238 aa). Positions 383 to 448 constitute a TRAM domain; the sequence is RAKVGKRLQV…DAYDLHGIAV (66 aa).

This sequence belongs to the methylthiotransferase family. RimO subfamily. [4Fe-4S] cluster is required as a cofactor.

Its subcellular location is the cytoplasm. The enzyme catalyses L-aspartate(89)-[ribosomal protein uS12]-hydrogen + (sulfur carrier)-SH + AH2 + 2 S-adenosyl-L-methionine = 3-methylsulfanyl-L-aspartate(89)-[ribosomal protein uS12]-hydrogen + (sulfur carrier)-H + 5'-deoxyadenosine + L-methionine + A + S-adenosyl-L-homocysteine + 2 H(+). Catalyzes the methylthiolation of an aspartic acid residue of ribosomal protein uS12. In Methylorubrum populi (strain ATCC BAA-705 / NCIMB 13946 / BJ001) (Methylobacterium populi), this protein is Ribosomal protein uS12 methylthiotransferase RimO.